A 132-amino-acid chain; its full sequence is Transcription antitermination protein NusB (132 aa).

Belongs to the NusB family.

Involved in transcription antitermination. Required for transcription of ribosomal RNA (rRNA) genes. Binds specifically to the boxA antiterminator sequence of the ribosomal RNA (rrn) operons. The sequence is that of Transcription antitermination protein NusB from Campylobacter jejuni subsp. jejuni serotype O:6 (strain 81116 / NCTC 11828).